A 485-amino-acid polypeptide reads, in one-letter code: Ribulose bisphosphate carboxylase large chain (485 aa).

The propeptide occupies 1–2 (MS). P3 bears the N-acetylproline mark. An N6,N6,N6-trimethyllysine modification is found at K14. Substrate-binding residues include N123 and T173. Residue K175 is the Proton acceptor of the active site. K177 is a substrate binding site. Residues K201, D203, and E204 each coordinate Mg(2+). N6-carboxylysine is present on K201. Catalysis depends on H294, which acts as the Proton acceptor. Residues R295, H327, and S379 each contribute to the substrate site.

Belongs to the RuBisCO large chain family. Type I subfamily. Heterohexadecamer of 8 large chains and 8 small chains; disulfide-linked. The disulfide link is formed within the large subunit homodimers. Requires Mg(2+) as cofactor. The disulfide bond which can form in the large chain dimeric partners within the hexadecamer appears to be associated with oxidative stress and protein turnover.

Its subcellular location is the plastid. It localises to the chloroplast. It carries out the reaction 2 (2R)-3-phosphoglycerate + 2 H(+) = D-ribulose 1,5-bisphosphate + CO2 + H2O. The catalysed reaction is D-ribulose 1,5-bisphosphate + O2 = 2-phosphoglycolate + (2R)-3-phosphoglycerate + 2 H(+). In terms of biological role, ruBisCO catalyzes two reactions: the carboxylation of D-ribulose 1,5-bisphosphate, the primary event in carbon dioxide fixation, as well as the oxidative fragmentation of the pentose substrate in the photorespiration process. Both reactions occur simultaneously and in competition at the same active site. The chain is Ribulose bisphosphate carboxylase large chain from Flaveria pringlei.